Consider the following 270-residue polypeptide: Extracellular metalloprotease MCYG_04966 (270 aa).

Positions 1-19 are cleaved as a signal peptide; it reads MRLSLFLSGLAAAGSIVSA. N135 is a glycosylation site (N-linked (GlcNAc...) asparagine). H184 is a Zn(2+) binding site. Residue E185 is part of the active site. H188 lines the Zn(2+) pocket. N199 carries an N-linked (GlcNAc...) asparagine glycan. The interval 208 to 227 is disordered; that stretch reads VADTPPQSKKTSGCPNSQDS. Residues 212 to 227 show a composition bias toward polar residues; that stretch reads PPQSKKTSGCPNSQDS. Cysteines 221 and 247 form a disulfide.

This sequence belongs to the peptidase M43B family.

The protein localises to the secreted. Functionally, secreted metalloproteinase that allows assimilation of proteinaceous substrates. Plays a pivotal role as a pathogenicity determinant during infections and contributes to the ability of the pathogen to persist within the mammalian host. In Arthroderma otae (strain ATCC MYA-4605 / CBS 113480) (Microsporum canis), this protein is Extracellular metalloprotease MCYG_04966.